A 372-amino-acid polypeptide reads, in one-letter code: GDP-mannose 4,6-dehydratase (372 aa).

NADP(+)-binding positions include 8–13 (GITGQD), 63–64 (DL), 85–89 (LGAQS), and Tyr-100. Residue Thr-132 is part of the active site. Residues Glu-134 and Tyr-156 each act as nucleophile in the active site. NADP(+)-binding residues include Lys-160, His-186, and Arg-191.

It belongs to the NAD(P)-dependent epimerase/dehydratase family. GDP-mannose 4,6-dehydratase subfamily. NADP(+) serves as cofactor.

It catalyses the reaction GDP-alpha-D-mannose = GDP-4-dehydro-alpha-D-rhamnose + H2O. The protein operates within bacterial outer membrane biogenesis; LPS O-antigen biosynthesis. It functions in the pathway nucleotide-sugar biosynthesis; GDP-L-fucose biosynthesis via de novo pathway; GDP-L-fucose from GDP-alpha-D-mannose: step 1/2. Its function is as follows. Catalyzes the conversion of GDP-D-mannose to GDP-4-dehydro-6-deoxy-D-mannose. This chain is GDP-mannose 4,6-dehydratase, found in Yersinia enterocolitica serotype O:8 / biotype 1B (strain NCTC 13174 / 8081).